Reading from the N-terminus, the 1227-residue chain is Anion exchange protein 3 (1227 aa).

Residues 1–11 (MANGVIPPPGG) show a composition bias toward pro residues. Disordered stretches follow at residues 1–256 (MANG…DEAE), 286–312 (KPSR…KKKK), and 428–497 (NDDK…GDGH). At 1-707 (MANGVIPPPG…DLRDALHSQC (707 aa)) the chain is on the cytoplasmic side. The span at 58–75 (DPEKPSRSYSERDFEFHR) shows a compositional bias: basic and acidic residues. Composition is skewed to basic residues over residues 76–97 (HTSH…KLRR) and 104–113 (RHTRRKRKKE). The span at 134–152 (AEEEEEEEEEEEGESEAEP) shows a compositional bias: acidic residues. Phosphoserine is present on residues S167, S170, S175, and S198. The span at 194–215 (QSDQSPQRSGSSPSPRARASRI) shows a compositional bias: low complexity. R294 is modified (omega-N-methylarginine). A compositionally biased stretch (low complexity) spans 435–448 (FFPRNPSSSSVNSV). Residues 480–497 (HDPDAKEKPLHMPGGDGH) show a composition bias toward basic and acidic residues. 4 helical membrane-spanning segments follow: residues 708 to 730 (VAAV…GLLG), 736 to 773 (LMGV…LLVF), 793 to 815 (VWVG…SFLV), and 825 to 846 (IFAF…YKVF). Positions 708–1227 (VAAVLFIYFA…DEYNELHMPV (520 aa)) are membrane (anion exchange). An N-linked (GlcNAc...) asparagine glycan is attached at N868. The helical transmembrane segment at 888-905 (ALLSLILMLGTFLIAFFL) threads the bilayer. The Cytoplasmic segment spans residues 906–920 (RKFRNSRFLGGKARR). The next 5 membrane-spanning stretches (helical) occupy residues 921-941 (IIGD…DYSI), 975-997 (PFPP…LIFM), 1023-1044 (LLLI…LTAA), 1078-1123 (VTGV…IQLS), and 1150-1186 (MHLF…TVPL). C1160 carries S-palmitoyl cysteine lipidation.

The protein belongs to the anion exchanger (TC 2.A.31) family. In terms of tissue distribution, expressed in the brain.

The protein localises to the cell membrane. It catalyses the reaction hydrogencarbonate(in) + chloride(out) = hydrogencarbonate(out) + chloride(in). With respect to regulation, inhibited by 4,4'-diisothiocyanatostilbene-2,2'-disulfonic acid (DIDS). Its function is as follows. Sodium-independent anion exchanger which mediates the electroneutral exchange of chloride for bicarbonate ions across the cell membrane. May be involved in the regulation of intracellular pH, and the modulation of cardiac action potential. In Mus musculus (Mouse), this protein is Anion exchange protein 3 (Slc4a3).